The chain runs to 195 residues: Imidazoleglycerol-phosphate dehydratase (195 aa).

Belongs to the imidazoleglycerol-phosphate dehydratase family.

The protein resides in the cytoplasm. The enzyme catalyses D-erythro-1-(imidazol-4-yl)glycerol 3-phosphate = 3-(imidazol-4-yl)-2-oxopropyl phosphate + H2O. The protein operates within amino-acid biosynthesis; L-histidine biosynthesis; L-histidine from 5-phospho-alpha-D-ribose 1-diphosphate: step 6/9. The polypeptide is Imidazoleglycerol-phosphate dehydratase (Pelotomaculum thermopropionicum (strain DSM 13744 / JCM 10971 / SI)).